The primary structure comprises 173 residues: NADH-quinone oxidoreductase subunit I 2 (173 aa).

2 consecutive 4Fe-4S ferredoxin-type domains span residues 41 to 73 and 83 to 112; these read IVLT…LAKA and EYFR…LTPD. The [4Fe-4S] cluster site is built by Cys53, Cys56, Cys59, Cys63, Cys92, Cys95, Cys98, and Cys102. Positions 153-163 are enriched in basic and acidic residues; the sequence is GKDKGEAEHEA. The disordered stretch occupies residues 153–173; sequence GKDKGEAEHEAPPVNLKGLLP.

This sequence belongs to the complex I 23 kDa subunit family. In terms of assembly, NDH-1 is composed of 14 different subunits. Subunits NuoA, H, J, K, L, M, N constitute the membrane sector of the complex. [4Fe-4S] cluster serves as cofactor.

The protein resides in the cell inner membrane. The catalysed reaction is a quinone + NADH + 5 H(+)(in) = a quinol + NAD(+) + 4 H(+)(out). Its function is as follows. NDH-1 shuttles electrons from NADH, via FMN and iron-sulfur (Fe-S) centers, to quinones in the respiratory chain. The immediate electron acceptor for the enzyme in this species is believed to be ubiquinone. Couples the redox reaction to proton translocation (for every two electrons transferred, four hydrogen ions are translocated across the cytoplasmic membrane), and thus conserves the redox energy in a proton gradient. This is NADH-quinone oxidoreductase subunit I 2 from Rhodopseudomonas palustris (strain ATCC BAA-98 / CGA009).